The chain runs to 274 residues: Undecaprenyl-diphosphatase 1 (274 aa).

Transmembrane regions (helical) follow at residues 7–27 (LEIFKAVILGIVQGITEWLPV), 48–68 (FISTFLVVIQFGSILAVLVIF), 88–108 (VRLWLKVIIAVIPSGVIGILF), 115–135 (LFFNSTVVAIALIVYGIIMIG), 151–171 (VTYKLALCIGLFQCLALIPGT), 189–209 (YVAAEFSFFLAIPTMLGASAL), 221–241 (FEWLILGVGSVVAFVVSIVVI), and 253–273 (FKVFGYYRIVLGIVVLAYFFL).

This sequence belongs to the UppP family.

Its subcellular location is the cell membrane. It carries out the reaction di-trans,octa-cis-undecaprenyl diphosphate + H2O = di-trans,octa-cis-undecaprenyl phosphate + phosphate + H(+). Functionally, catalyzes the dephosphorylation of undecaprenyl diphosphate (UPP). Confers resistance to bacitracin. In Clostridioides difficile (strain 630) (Peptoclostridium difficile), this protein is Undecaprenyl-diphosphatase 1.